The following is a 422-amino-acid chain: G2/mitotic-specific cyclin-A (422 aa).

The disordered stretch occupies residues 1–29 (MSQPFALHHDGENQMQRRGKMNTRSNGLS).

It belongs to the cyclin family. Cyclin AB subfamily.

In terms of biological role, essential for the control of the cell cycle at the G2/M (mitosis) transition. Interacts with the CDC2 and CDK2 protein kinases to form MPF. G2/M cyclins accumulate steadily during G2 and are abruptly destroyed at mitosis. This chain is G2/mitotic-specific cyclin-A, found in Spisula solidissima (Atlantic surf-clam).